The following is a 242-amino-acid chain: uncharacterized protein (242 aa).

An N-terminal signal peptide occupies residues M1 to A17. Residues N47, N86, N122, N159, and N178 are each glycosylated (N-linked (GlcNAc...) asparagine). Positions N176–A214 are disordered. A compositionally biased stretch (low complexity) spans S180–A214. Residue A218 is the site of GPI-like-anchor amidated alanine attachment. The propeptide at G219–L242 is removed in mature form.

In terms of processing, the GPI-like anchor contains a phosphoceramide lipid group. The anchor position has not been determined.

The protein resides in the cell membrane. This is an uncharacterized protein from Aspergillus fumigatus (strain ATCC MYA-4609 / CBS 101355 / FGSC A1100 / Af293) (Neosartorya fumigata).